The sequence spans 213 residues: ATP-dependent Clp protease proteolytic subunit (213 aa).

Residue Ser114 is the Nucleophile of the active site. His139 is a catalytic residue.

This sequence belongs to the peptidase S14 family. Fourteen ClpP subunits assemble into 2 heptameric rings which stack back to back to give a disk-like structure with a central cavity, resembling the structure of eukaryotic proteasomes.

The protein resides in the cytoplasm. The catalysed reaction is Hydrolysis of proteins to small peptides in the presence of ATP and magnesium. alpha-casein is the usual test substrate. In the absence of ATP, only oligopeptides shorter than five residues are hydrolyzed (such as succinyl-Leu-Tyr-|-NHMec, and Leu-Tyr-Leu-|-Tyr-Trp, in which cleavage of the -Tyr-|-Leu- and -Tyr-|-Trp bonds also occurs).. In terms of biological role, cleaves peptides in various proteins in a process that requires ATP hydrolysis. Has a chymotrypsin-like activity. Plays a major role in the degradation of misfolded proteins. This Pseudomonas putida (strain GB-1) protein is ATP-dependent Clp protease proteolytic subunit.